The following is an 88-amino-acid chain: UPF0223 protein RBAM_014500 (88 aa).

It belongs to the UPF0223 family.

The sequence is that of UPF0223 protein RBAM_014500 from Bacillus velezensis (strain DSM 23117 / BGSC 10A6 / LMG 26770 / FZB42) (Bacillus amyloliquefaciens subsp. plantarum).